We begin with the raw amino-acid sequence, 870 residues long: Aldehyde-alcohol dehydrogenase 2 (870 aa).

Cysteine 252 is an active-site residue. Residue 431–436 (GCGSYG) coordinates NAD(+).

The protein in the N-terminal section; belongs to the aldehyde dehydrogenase family. It in the C-terminal section; belongs to the iron-containing alcohol dehydrogenase family. In terms of assembly, seems to form a rod shaped homomer composed of at least 20 identical subunits. It depends on Zn(2+) as a cofactor. Fe(2+) is required as a cofactor.

The enzyme catalyses a primary alcohol + NAD(+) = an aldehyde + NADH + H(+). It catalyses the reaction a secondary alcohol + NAD(+) = a ketone + NADH + H(+). The catalysed reaction is acetaldehyde + NAD(+) + CoA = acetyl-CoA + NADH + H(+). In terms of biological role, this enzyme has two NAD(+)-dependent activities: ADH and ACDH. May be a critical enzyme in the fermentative pathway. This chain is Aldehyde-alcohol dehydrogenase 2 (ADH2), found in Entamoeba histolytica (strain ATCC 30459 / HM-1:IMSS / ABRM).